A 430-amino-acid chain; its full sequence is Terminal nucleotidyltransferase 5B (430 aa).

A disordered region spans residues 1 to 46 (MMPSESETESRDRAAAQVGTAAAAAVAKAAPAGGGPDPEASSASLG). Positions 15–44 (AAQVGTAAAAAVAKAAPAGGGPDPEASSAS) are enriched in low complexity.

The protein belongs to the TENT family.

The protein resides in the cytoplasm. It is found in the nucleus. The catalysed reaction is RNA(n) + ATP = RNA(n)-3'-adenine ribonucleotide + diphosphate. Catalyzes the transfer of one adenosine molecule from an ATP to an mRNA poly(A) tail bearing a 3'-OH terminal group in an ATP hydrolysis-dependent manner. May be involved in maintaining the translation efficiency of at least some genes through preventing degradation of their mRNAs. Prefers RNA molecules that are adenosine-rich close to 3'-end. In addition, may inhibit cell proliferation and cell cycle progression through ubiquitination of beta-catenin/CTNNB1. The polypeptide is Terminal nucleotidyltransferase 5B (Bos taurus (Bovine)).